A 200-amino-acid polypeptide reads, in one-letter code: dITP/XTP pyrophosphatase (200 aa).

Residue 7–12 (SNNYHK) coordinates substrate. D68 acts as the Proton acceptor in catalysis. Position 68 (D68) interacts with Mg(2+). Residues S69, 147–150 (FGYD), K170, and 175–176 (HR) contribute to the substrate site.

The protein belongs to the HAM1 NTPase family. Homodimer. It depends on Mg(2+) as a cofactor.

It catalyses the reaction XTP + H2O = XMP + diphosphate + H(+). The enzyme catalyses dITP + H2O = dIMP + diphosphate + H(+). The catalysed reaction is ITP + H2O = IMP + diphosphate + H(+). In terms of biological role, pyrophosphatase that catalyzes the hydrolysis of nucleoside triphosphates to their monophosphate derivatives, with a high preference for the non-canonical purine nucleotides XTP (xanthosine triphosphate), dITP (deoxyinosine triphosphate) and ITP. Seems to function as a house-cleaning enzyme that removes non-canonical purine nucleotides from the nucleotide pool, thus preventing their incorporation into DNA/RNA and avoiding chromosomal lesions. This Acholeplasma laidlawii (strain PG-8A) protein is dITP/XTP pyrophosphatase.